We begin with the raw amino-acid sequence, 525 residues long: Neuropilin and tolloid-like protein 2 (525 aa).

The N-terminal stretch at 1 to 22 (MALEQLCAVLKVLLITVLVVEG) is a signal peptide. Over 23–347 (IAVAQKTQDG…GLFEQITKTH (325 aa)) the chain is Extracellular. Disulfide bonds link cysteine 45–cysteine 72, cysteine 100–cysteine 122, cysteine 177–cysteine 207, cysteine 234–cysteine 256, cysteine 297–cysteine 309, cysteine 304–cysteine 322, and cysteine 316–cysteine 331. 2 CUB domains span residues 45–159 (CGIW…YSFI) and 177–292 (CQFE…FTSF). The 37-residue stretch at 296–332 (PCTSSTFFCHSNMCINNSLVCNGVQNCAYPWDENHCK) folds into the LDL-receptor class A domain. A glycan (N-linked (GlcNAc...) asparagine) is linked at asparagine 311. A helical transmembrane segment spans residues 348–368 (GTIIGITSGIVLVLLIISILV). At 369 to 525 (QVKQPRKKVM…SAQASISIDF (157 aa)) the chain is on the cytoplasmic side. At serine 409 the chain carries Phosphoserine.

Interacts with GRIK2 and GRIK3, but neither with AMPA-nor with NMDA-sensitive glutamate receptors. N-glycosylated. Expressed in brain tissues, including cerebellar granule cells (at protein level).

The protein localises to the cell membrane. Functionally, accessory subunit of neuronal kainate-sensitive glutamate receptors, GRIK2 and GRIK3. Increases kainate-receptor channel activity, slowing the decay kinetics of the receptors, without affecting their expression at the cell surface, and increasing the open probability of the receptor channels. Modulates the agonist sensitivity of kainate receptors. Slows the decay of kainate receptor-mediated excitatory postsynaptic currents (EPSCs), thus directly influencing synaptic transmission. The chain is Neuropilin and tolloid-like protein 2 (Neto2) from Mus musculus (Mouse).